The sequence spans 90 residues: uncharacterized protein (90 aa).

This sequence belongs to the barstar family.

This is an uncharacterized protein from Escherichia coli O157:H7.